We begin with the raw amino-acid sequence, 343 residues long: Isopentenyl-diphosphate delta-isomerase (343 aa).

Residue 6-7 coordinates substrate; the sequence is RK. Residues serine 63, 64–66, serine 94, and asparagine 122 each bind FMN; that span reads SMT. 94–96 contributes to the substrate binding site; that stretch reads SMR. Substrate is bound at residue glutamine 157. Mg(2+) is bound at residue glutamate 158. Residues lysine 189, threonine 219, 269-271, and 290-291 contribute to the FMN site; these read GLK and AG.

This sequence belongs to the IPP isomerase type 2 family. Homooctamer. Dimer of tetramers. FMN is required as a cofactor. Requires NADPH as cofactor. The cofactor is Mg(2+).

Its subcellular location is the cytoplasm. The catalysed reaction is isopentenyl diphosphate = dimethylallyl diphosphate. Functionally, involved in the biosynthesis of isoprenoids. Catalyzes the 1,3-allylic rearrangement of the homoallylic substrate isopentenyl (IPP) to its allylic isomer, dimethylallyl diphosphate (DMAPP). This chain is Isopentenyl-diphosphate delta-isomerase, found in Rickettsia bellii (strain OSU 85-389).